The chain runs to 509 residues: Activin receptor type-1 (509 aa).

The signal sequence occupies residues 1 to 20; sequence MVDGVMILPVLVMIAFPFPS. Over 21 to 123 the chain is Extracellular; it reads MEDEKPKVNP…FPGTQNFHLE (103 aa). Residue asparagine 102 is glycosylated (N-linked (GlcNAc...) asparagine). The chain crosses the membrane as a helical span at residues 124–146; sequence VGLIILSVVFAVCLLACLLGVAL. The Cytoplasmic portion of the chain corresponds to 147–509; that stretch reads RKFKRRNQER…NSLDKLKTDC (363 aa). The region spanning 178–207 is the GS domain; sequence STLADLLDHSCTSGSGSGLPFLVQRTVARQ. The Protein kinase domain maps to 208–502; sequence ITLLECVGKG…KTLTKIDNSL (295 aa). ATP contacts are provided by residues 214–222 and lysine 235; that span reads VGKGRYGEV. Catalysis depends on aspartate 336, which acts as the Proton acceptor. Serine 501 carries the post-translational modification Phosphoserine.

The protein belongs to the protein kinase superfamily. TKL Ser/Thr protein kinase family. TGFB receptor subfamily. As to quaternary structure, interacts with FKBP1A. Interacts with FCHO1. Interacts with CLU. Interacts with type II receptors AMHR2 and ACVR2A. Interacts with BMP7. Interacts with BMP9. Interacts with BMP6 (when glycosylated); the interaction may induce HAMP expression. Interacts with TSC22D1/TSC-22. It depends on Mg(2+) as a cofactor. Mn(2+) serves as cofactor.

It is found in the membrane. The catalysed reaction is L-threonyl-[receptor-protein] + ATP = O-phospho-L-threonyl-[receptor-protein] + ADP + H(+). The enzyme catalyses L-seryl-[receptor-protein] + ATP = O-phospho-L-seryl-[receptor-protein] + ADP + H(+). Bone morphogenetic protein (BMP) type I receptor that is involved in a wide variety of biological processes, including bone, heart, cartilage, nervous, and reproductive system development and regulation. As a type I receptor, forms heterotetrameric receptor complexes with the type II receptors AMHR2, ACVR2A ors ACVR2B. Upon binding of ligands such as BMP7 or BMP9 to the heteromeric complexes, type II receptors transphosphorylate ACVR1 intracellular domain. In turn, ACVR1 kinase domain is activated and subsequently phosphorylates SMAD1/5/8 proteins that transduce the signal. In addition to its role in mediating BMP pathway-specific signaling, suppresses TGFbeta/activin pathway signaling by interfering with the binding of activin to its type II receptor. Besides canonical SMAD signaling, can activate non-canonical signaling pathways. May promote the expression of HAMP, potentially via its interaction with BMP6. This chain is Activin receptor type-1 (ACVR1), found in Bos taurus (Bovine).